Here is a 62-residue protein sequence, read N- to C-terminus: Sperm protamine P1 (62 aa).

The tract at residues 1–62 (MARYRHSRSR…RYSRRRRRRY (62 aa)) is disordered.

This sequence belongs to the protamine P1 family. As to expression, testis.

Its subcellular location is the nucleus. It is found in the chromosome. Protamines substitute for histones in the chromatin of sperm during the haploid phase of spermatogenesis. They compact sperm DNA into a highly condensed, stable and inactive complex. This Dorcopsulus vanheurni (Lesser forest wallaby) protein is Sperm protamine P1 (PRM1).